The sequence spans 273 residues: DnaJ homolog subfamily C member 27 (273 aa).

The tract at residues 1 to 18 (MEANMPKRKEPGRSLRIK) is required for interaction with MAPK1. GTP contacts are provided by residues 23-30 (GNAEVGKS), 71-75 (DMAGH), and 134-137 (NKID). The 57-residue stretch at 217–273 (GSWDMLGVKPGASRDEVNKACRKLAVLLHPDKCVAPGSEDAFKAVVNARTALLKNIK) folds into the J domain.

This sequence belongs to the small GTPase superfamily. Rab family. In terms of assembly, interacts directly with MAPK1 (wild-type and kinase-deficient forms). Interacts directly (in GTP-bound form) with MAP2K1 (wild-type and kinase-deficient forms).

It localises to the nucleus. Functionally, GTPase which can activate the MEK/ERK pathway and induce cell transformation when overexpressed. May act as a nuclear scaffold for MAPK1, probably by association with MAPK1 nuclear export signal leading to enhanced ERK1/ERK2 signaling. This Pongo abelii (Sumatran orangutan) protein is DnaJ homolog subfamily C member 27 (DNAJC27).